We begin with the raw amino-acid sequence, 495 residues long: ATP synthase subunit beta (495 aa).

Residue G178–T185 coordinates ATP.

Belongs to the ATPase alpha/beta chains family. In terms of assembly, F-type ATPases have 2 components, CF(1) - the catalytic core - and CF(0) - the membrane proton channel. CF(1) has five subunits: alpha(3), beta(3), gamma(1), delta(1), epsilon(1). CF(0) has three main subunits: a(1), b(2) and c(9-12). The alpha and beta chains form an alternating ring which encloses part of the gamma chain. CF(1) is attached to CF(0) by a central stalk formed by the gamma and epsilon chains, while a peripheral stalk is formed by the delta and b chains.

It localises to the cell membrane. It catalyses the reaction ATP + H2O + 4 H(+)(in) = ADP + phosphate + 5 H(+)(out). Functionally, produces ATP from ADP in the presence of a proton gradient across the membrane. The catalytic sites are hosted primarily by the beta subunits. The sequence is that of ATP synthase subunit beta from Bifidobacterium animalis subsp. lactis (strain AD011).